The chain runs to 127 residues: MNIKNSLILIISTIFVLSMINGGLTSDPTCVGAPDGQVYLFSSWDFQGERYVYNISQGYLSLPDGFRNNIQSFVSGADVCFVKWYPSEQYQITAGESHRNYAALTNFGQRMDAIIPGNCSNIVCSPK.

The N-terminal stretch at 1 to 25 (MNIKNSLILIISTIFVLSMINGGLT) is a signal peptide. N54 and N118 each carry an N-linked (GlcNAc...) asparagine glycan.

This sequence belongs to the Dictyostelium gerABC family.

The protein resides in the secreted. The chain is Spore germination protein 1 (gerA) from Dictyostelium discoideum (Social amoeba).